The sequence spans 880 residues: Envelope glycoprotein gp160 (880 aa).

The first 35 residues, methionine 1–aspartate 35, serve as a signal peptide directing secretion. Residues asparagine 36–isoleucine 701 lie on the Extracellular side of the membrane. Cysteine 57 and cysteine 77 are oxidised to a cystine. Residues asparagine 91, asparagine 133, asparagine 145, asparagine 148, asparagine 157, asparagine 163, asparagine 173, asparagine 177, asparagine 221, asparagine 256, asparagine 265, asparagine 286, asparagine 299, asparagine 312, asparagine 318, asparagine 324, asparagine 356, asparagine 372, and asparagine 381 are each glycosylated (N-linked (GlcNAc...) asparagine; by host). Cystine bridges form between cysteine 122/cysteine 229, cysteine 129/cysteine 220, cysteine 134/cysteine 174, cysteine 242/cysteine 271, and cysteine 252/cysteine 263. The V1 stretch occupies residues cysteine 134–asparagine 173. The tract at residues cysteine 174–cysteine 220 is V2. Positions cysteine 319 to phenylalanine 352 are V3. Cysteine 319 and cysteine 353 form a disulfide bridge. Residues serine 389 to leucine 399 are CD4-binding loop. 2 disulfides stabilise this stretch: cysteine 403-cysteine 461 and cysteine 410-cysteine 434. Positions cysteine 410–cysteine 434 are V4. Asparagine 411, asparagine 417, asparagine 423, asparagine 429, asparagine 464, and asparagine 479 each carry an N-linked (GlcNAc...) asparagine; by host glycan. The tract at residues asparagine 479 to valine 487 is V5. Residues alanine 528 to alanine 549 form a fusion peptide region. The tract at residues lysine 591 to leucine 609 is immunosuppression. Residues cysteine 615 and cysteine 621 are joined by a disulfide bond. Asparagine 628, asparagine 633, asparagine 642, and asparagine 654 each carry an N-linked (GlcNAc...) asparagine; by host glycan. Positions lysine 650–alanine 684 form a coiled coil. Positions glutamate 679 to lysine 700 are MPER; binding to GalCer. Residues phenylalanine 702–valine 722 traverse the membrane as a helical segment. The Cytoplasmic portion of the chain corresponds to asparagine 723–leucine 880. Positions tyrosine 729 to leucine 732 match the YXXL motif; contains endocytosis signal motif. A lipid anchor (S-palmitoyl cysteine; by host) is attached at cysteine 781. The Di-leucine internalization motif signature appears at leucine 879–leucine 880.

This sequence belongs to the HIV-1 env protein family. The mature envelope protein (Env) consists of a homotrimer of non-covalently associated gp120-gp41 heterodimers. The resulting complex protrudes from the virus surface as a spike. There seems to be as few as 10 spikes on the average virion. Interacts with host CD4, CCR5 and CXCR4. Gp120 also interacts with the C-type lectins CD209/DC-SIGN and CLEC4M/DC-SIGNR (collectively referred to as DC-SIGN(R)). Gp120 and gp41 interact with GalCer. Gp120 interacts with host ITGA4/ITGB7 complex; on CD4+ T-cells, this interaction results in rapid activation of integrin ITGAL/LFA-1, which facilitates efficient cell-to-cell spreading of HIV-1. Gp120 interacts with cell-associated heparan sulfate; this interaction increases virus infectivity on permissive cells and may be involved in infection of CD4- cells. In terms of assembly, the mature envelope protein (Env) consists of a homotrimer of non-covalently associated gp120-gp41 heterodimers. The resulting complex protrudes from the virus surface as a spike. There seems to be as few as 10 spikes on the average virion. Highly glycosylated by host. The high number of glycan on the protein is reffered to as 'glycan shield' because it contributes to hide protein sequence from adaptive immune system. In terms of processing, palmitoylation of the transmembrane protein and of Env polyprotein (prior to its proteolytic cleavage) is essential for their association with host cell membrane lipid rafts. Palmitoylation is therefore required for envelope trafficking to classical lipid rafts, but not for viral replication. Post-translationally, specific enzymatic cleavages in vivo yield mature proteins. Envelope glycoproteins are synthesized as an inactive precursor that is heavily N-glycosylated and processed likely by host cell furin in the Golgi to yield the mature SU and TM proteins. The cleavage site between SU and TM requires the minimal sequence [KR]-X-[KR]-R. About 2 of the 9 disulfide bonds of gp41 are reduced by P4HB/PDI, following binding to CD4 receptor.

The protein resides in the virion membrane. It localises to the host cell membrane. The protein localises to the host endosome membrane. Its function is as follows. Attaches the virus to the host lymphoid cell by binding to the primary receptor CD4. This interaction induces a structural rearrangement creating a high affinity binding site for a chemokine coreceptor like CXCR4 and/or CCR5. Acts as a ligand for CD209/DC-SIGN and CLEC4M/DC-SIGNR, which are respectively found on dendritic cells (DCs), and on endothelial cells of liver sinusoids and lymph node sinuses. These interactions allow capture of viral particles at mucosal surfaces by these cells and subsequent transmission to permissive cells. HIV subverts the migration properties of dendritic cells to gain access to CD4+ T-cells in lymph nodes. Virus transmission to permissive T-cells occurs either in trans (without DCs infection, through viral capture and transmission), or in cis (following DCs productive infection, through the usual CD4-gp120 interaction), thereby inducing a robust infection. In trans infection, bound virions remain infectious over days and it is proposed that they are not degraded, but protected in non-lysosomal acidic organelles within the DCs close to the cell membrane thus contributing to the viral infectious potential during DCs' migration from the periphery to the lymphoid tissues. On arrival at lymphoid tissues, intact virions recycle back to DCs' cell surface allowing virus transmission to CD4+ T-cells. Functionally, acts as a class I viral fusion protein. Under the current model, the protein has at least 3 conformational states: pre-fusion native state, pre-hairpin intermediate state, and post-fusion hairpin state. During fusion of viral and target intracellular membranes, the coiled coil regions (heptad repeats) assume a trimer-of-hairpins structure, positioning the fusion peptide in close proximity to the C-terminal region of the ectodomain. The formation of this structure appears to drive apposition and subsequent fusion of viral and target cell membranes. Complete fusion occurs in host cell endosomes and is dynamin-dependent, however some lipid transfer might occur at the plasma membrane. The virus undergoes clathrin-dependent internalization long before endosomal fusion, thus minimizing the surface exposure of conserved viral epitopes during fusion and reducing the efficacy of inhibitors targeting these epitopes. Membranes fusion leads to delivery of the nucleocapsid into the cytoplasm. In terms of biological role, oligomerizes in the host endoplasmic reticulum into predominantly trimers. In a second time, gp160 transits in the host Golgi, where glycosylation is completed. The precursor is then proteolytically cleaved in the trans-Golgi and thereby activated by cellular furin or furin-like proteases to produce gp120 and gp41. The sequence is that of Envelope glycoprotein gp160 from Pan troglodytes (Chimpanzee).